Reading from the N-terminus, the 1342-residue chain is DNA-directed RNA polymerase subunit beta (1342 aa).

The protein belongs to the RNA polymerase beta chain family. The RNAP catalytic core consists of 2 alpha, 1 beta, 1 beta' and 1 omega subunit. When a sigma factor is associated with the core the holoenzyme is formed, which can initiate transcription.

It carries out the reaction RNA(n) + a ribonucleoside 5'-triphosphate = RNA(n+1) + diphosphate. In terms of biological role, DNA-dependent RNA polymerase catalyzes the transcription of DNA into RNA using the four ribonucleoside triphosphates as substrates. This chain is DNA-directed RNA polymerase subunit beta, found in Salmonella gallinarum (strain 287/91 / NCTC 13346).